The chain runs to 115 residues: Large ribosomal subunit protein bL19 (115 aa).

Belongs to the bacterial ribosomal protein bL19 family.

In terms of biological role, this protein is located at the 30S-50S ribosomal subunit interface and may play a role in the structure and function of the aminoacyl-tRNA binding site. This Francisella tularensis subsp. holarctica (strain FTNF002-00 / FTA) protein is Large ribosomal subunit protein bL19.